The chain runs to 396 residues: Smad nuclear-interacting protein 1 (396 aa).

Residues 1–10 are compositionally biased toward basic and acidic residues; it reads MKAVKSERER. Positions 1-227 are disordered; sequence MKAVKSERER…VPAKEKPSFE (227 aa). Residue Lys30 forms a Glycyl lysine isopeptide (Lys-Gly) (interchain with G-Cter in SUMO); alternate linkage. A Glycyl lysine isopeptide (Lys-Gly) (interchain with G-Cter in SUMO1); alternate cross-link involves residue Lys30. Residue Lys30 forms a Glycyl lysine isopeptide (Lys-Gly) (interchain with G-Cter in SUMO2); alternate linkage. Ser35, Ser49, Ser52, and Ser54 each carry phosphoserine. Thr57 carries the phosphothreonine modification. Ser58 and Ser99 each carry phosphoserine. Over residues 77–105 the composition is skewed to basic residues; that stretch reads PPKKKNKASGRRSKSPRSKRNRSPHHSTV. Over residues 107–142 the composition is skewed to basic and acidic residues; the sequence is VKQEREDHPRRGREDRQHREPSEQEHRRARNSDRDR. Residue Lys108 forms a Glycyl lysine isopeptide (Lys-Gly) (interchain with G-Cter in SUMO2) linkage. Ser153 is modified (phosphoserine). A coiled-coil region spans residues 165–196; sequence RDRDTQNLQAQEEEREFYNARRREHRQRNDVG. Ser202 is subject to Phosphoserine. A compositionally biased stretch (basic and acidic residues) spans 213–225; the sequence is NKEKEVPAKEKPS. Lys223 is covalently cross-linked (Glycyl lysine isopeptide (Lys-Gly) (interchain with G-Cter in SUMO2)). The FHA domain occupies 281–344; sequence YLLGRHRRIA…NGTFLNNKRI (64 aa). The segment covering 373 to 382 has biased composition (basic and acidic residues); it reads SSDTSEIDRK. The disordered stretch occupies residues 373-396; sequence SSDTSEIDRKDDEDEEEEEEVSDS. Residues 383-396 show a composition bias toward acidic residues; it reads DDEDEEEEEEVSDS. A Phosphoserine modification is found at Ser394.

As to quaternary structure, component of activated spliceosome complexes. Component of the minor spliceosome, which splices U12-type introns. Binds SMAD4 and CREBBP/EP300. Binds the SMAD1/OAZ1/PSMB4 complex. Interacts with DROSHA and SMARCA4. Component of the SNARP complex which consists at least of SNIP1, SNW1, THRAP3, BCLAF1 and PNN. Degraded by the proteasome upon binding to the SMAD1/OAZ1/PSMB4 complex. In terms of tissue distribution, ubiquitous, with highest expression in heart and skeletal muscle.

It is found in the nucleus. Its function is as follows. Required for pre-mRNA splicing as component of the spliceosome. As a component of the minor spliceosome, involved in the splicing of U12-type introns in pre-mRNAs. Down-regulates NF-kappa-B signaling by competing with RELA for CREBBP/EP300 binding. Involved in the microRNA (miRNA) biogenesis. May be involved in cyclin-D1/CCND1 mRNA stability through the SNARP complex which associates with both the 3'end of the CCND1 gene and its mRNA. The sequence is that of Smad nuclear-interacting protein 1 (SNIP1) from Homo sapiens (Human).